Reading from the N-terminus, the 39-residue chain is Photosystem II reaction center protein I (39 aa).

The helical transmembrane segment at 6-26 (ISVYSVVFFFIGIFMFGFLAS) threads the bilayer.

Belongs to the PsbI family. PSII is composed of 1 copy each of membrane proteins PsbA, PsbB, PsbC, PsbD, PsbE, PsbF, PsbH, PsbI, PsbJ, PsbK, PsbL, PsbM, PsbT, PsbX, PsbY, PsbZ, Psb30/Ycf12, peripheral proteins PsbO, CyanoQ (PsbQ), PsbU, PsbV and a large number of cofactors. It forms dimeric complexes.

The protein resides in the cellular thylakoid membrane. In terms of biological role, one of the components of the core complex of photosystem II (PSII), required for its stability and/or assembly. PSII is a light-driven water:plastoquinone oxidoreductase that uses light energy to abstract electrons from H(2)O, generating O(2) and a proton gradient subsequently used for ATP formation. It consists of a core antenna complex that captures photons, and an electron transfer chain that converts photonic excitation into a charge separation. The polypeptide is Photosystem II reaction center protein I (Synechococcus sp. (strain RCC307)).